The following is a 340-amino-acid chain: Toxin coregulated pilus biosynthesis protein E (340 aa).

3 consecutive transmembrane segments (helical) span residues 108 to 131 (AISS…GYSV), 146 to 161 (WPGV…FSLY), and 312 to 333 (NISL…FSLV).

It belongs to the GSP F family.

The protein localises to the cell inner membrane. Its function is as follows. Probably involved in cholera toxin receptor (GM1) interaction in order to bring the cells within close proximity of the ganglioside for efficient toxin delivery. In Vibrio cholerae serotype O1 (strain ATCC 39315 / El Tor Inaba N16961), this protein is Toxin coregulated pilus biosynthesis protein E (tcpE).